A 212-amino-acid chain; its full sequence is 3-isopropylmalate dehydratase small subunit (212 aa).

Belongs to the LeuD family. LeuD type 1 subfamily. Heterodimer of LeuC and LeuD.

The enzyme catalyses (2R,3S)-3-isopropylmalate = (2S)-2-isopropylmalate. Its pathway is amino-acid biosynthesis; L-leucine biosynthesis; L-leucine from 3-methyl-2-oxobutanoate: step 2/4. Its function is as follows. Catalyzes the isomerization between 2-isopropylmalate and 3-isopropylmalate, via the formation of 2-isopropylmaleate. This Nitrosomonas eutropha (strain DSM 101675 / C91 / Nm57) protein is 3-isopropylmalate dehydratase small subunit.